Reading from the N-terminus, the 229-residue chain is Elongation factor 1-delta 1 (229 aa).

Residues 80–109 form a disordered region; it reads ESTAVPSASTPDVADAKAPAADDDDDDDVD. A compositionally biased stretch (acidic residues) spans 100–109; sequence ADDDDDDDVD.

It belongs to the EF-1-beta/EF-1-delta family. As to quaternary structure, EF-1 is composed of 4 subunits: alpha, beta (1B-alpha=beta'), delta (1B-beta), and gamma (1B-gamma).

Its function is as follows. EF-1-beta and EF-1-beta' stimulate the exchange of GDP bound to EF-1-alpha to GTP. This Oryza sativa subsp. japonica (Rice) protein is Elongation factor 1-delta 1.